A 297-amino-acid chain; its full sequence is Mitochondrial nicotinamide adenine dinucleotide transporter SLC25A52 (297 aa).

3 Solcar repeats span residues 28–108 (VGEM…LSCL), 116–200 (PEFA…IKEH), and 209–296 (AHLV…LLKF). The next 6 membrane-spanning stretches (helical) occupy residues 34–51 (YLCG…TYPI), 85–105 (LPPL…YEDL), 118–138 (FATH…FTPL), 179–199 (ILFR…PIKE), 215–235 (FIGG…INVV), and 268–289 (LFRG…INAT).

Belongs to the mitochondrial carrier (TC 2.A.29) family.

The protein resides in the mitochondrion inner membrane. It carries out the reaction NAD(+)(in) = NAD(+)(out). In terms of biological role, mitochondrial membrane carrier protein that mediates the import of NAD(+) into mitochondria. Compared to SLC25A51, SLC25A52-mediated transport is not essential for the import of NAD(+) in mitochondria. The transport mechanism, uniport or antiport, its electrogenicity and substrate selectivity, remain to be elucidated. The sequence is that of Mitochondrial nicotinamide adenine dinucleotide transporter SLC25A52 from Homo sapiens (Human).